We begin with the raw amino-acid sequence, 540 residues long: MALTRPVRLFSLVTRLLLAPRRGLTVRSPDEPLPVVRIPVALQRQLEQRQSRRRNLPRPVLVRPGPLLVSARRPELNQPARLTLGRWERAPLASQGWKSRRARRDHFSIERAQQEAPAVRKLSSKGSFADLGLEPRVLHALQEAAPEVVQPTTVQSSTIPSLLRGRHVVCAAETGSGKTLSYLLPLLQRLLGQPSLDSLPIPAPRGLVLVPSRELAQQVRAVAQPLGRSLGLLVRDLEGGHGMRRIRLQLSRQPSADVLVATPGALWKALKSRLISLEQLSFLVLDEADTLLDESFLELVDYILEKSHIAEGPADLEDPFNPKAQLVLVGATFPEGVGQLLNKVASPDAVTTITSSKLHCIMPHVKQTFLRLKGADKVAELVHILKHRDRAERTGPSGTVLVFCNSSSTVNWLGYILDDHKIQHLRLQGQMPALMRVGIFQSFQKSSRDILLCTDIASRGLDSTGVELVVNYDFPPTLQDYIHRAGRVGRVGSEVPGTVISFVTHPWDVSLVQKIELAARRRRSLPGLASSVKEPLPQAT.

Residues 3–18 carry the Mitochondrial targeting signal motif; sequence LTRPVRLFSLVTRLLL. The short motif at 126–156 is the Q motif element; that stretch reads GSFADLGLEPRVLHALQEAAPEVVQPTTVQS. The region spanning 159–351 is the Helicase ATP-binding domain; it reads IPSLLRGRHV…NKVASPDAVT (193 aa). 172-179 lines the ATP pocket; the sequence is AETGSGKT. The short motif at 180 to 191 is the Nuclear export signal element; that stretch reads LSYLLPLLQRLL. The DEAD motif lies at 286–289; it reads DEAD. A Helicase C-terminal domain is found at 377–536; the sequence is KVAELVHILK…GLASSVKEPL (160 aa). The short motif at 520 to 523 is the Nuclear localization signal element; that stretch reads RRRR.

The protein belongs to the DEAD box helicase family. In terms of assembly, monomer. Found in a complex with GRSF1, DHX30, FASTKD2 and FASTKD5. Associates with the 16S mitochondrial rRNA (16S mt-rRNA) and with the mitochondrial ribosome large subunit (39S). Expressed in all tissues tested, including brain, placenta, lung, liver, skeletal muscle, kidney, pancreas, leukocytes, colon, small intestine, ovary and prostate.

It localises to the nucleus. Its subcellular location is the mitochondrion. It is found in the mitochondrion matrix. The protein resides in the mitochondrion nucleoid. The enzyme catalyses ATP + H2O = ADP + phosphate + H(+). Functionally, plays an essential role in facilitating the proper assembly of the mitochondrial large ribosomal subunit and its helicase activity is essential for this function. May be involved in RNA processing or transport. Has RNA and Mg(2+)-dependent ATPase activity. The chain is Probable ATP-dependent RNA helicase DDX28 (DDX28) from Homo sapiens (Human).